The primary structure comprises 157 residues: Protein AE7 (157 aa).

This sequence belongs to the MIP18 family. In terms of assembly, part of a complex formed of AE7, CIA1, MMS19 and NAR1. Interacts with CIA1 and MMS19, but not with NAR1. In terms of tissue distribution, expressed in the embryo, shoot apical meristem, leaf primordia, inflorescence and all floral organs.

The protein resides in the nucleus. It is found in the cytoplasm. Its function is as follows. Central member of the cytosolic iron-sulfur (Fe-S) protein assembly (CIA) pathway. Involved in leaf polarity formation. Promotes leaf adaxial identity. May play a role in the cell cycle progression and is required for cell proliferation. The sequence is that of Protein AE7 from Arabidopsis thaliana (Mouse-ear cress).